We begin with the raw amino-acid sequence, 96 residues long: Small ribosomal subunit protein bS6 (96 aa).

The protein belongs to the bacterial ribosomal protein bS6 family.

In terms of biological role, binds together with bS18 to 16S ribosomal RNA. The polypeptide is Small ribosomal subunit protein bS6 (Streptococcus pyogenes serotype M1).